The chain runs to 137 residues: Large ribosomal subunit protein bL12 (137 aa).

Belongs to the bacterial ribosomal protein bL12 family. As to quaternary structure, homodimer. Part of the ribosomal stalk of the 50S ribosomal subunit. Forms a multimeric L10(L12)X complex, where L10 forms an elongated spine to which 2 to 4 L12 dimers bind in a sequential fashion. Binds GTP-bound translation factors.

Its function is as follows. Forms part of the ribosomal stalk which helps the ribosome interact with GTP-bound translation factors. Is thus essential for accurate translation. The sequence is that of Large ribosomal subunit protein bL12 from Synechococcus sp. (strain JA-3-3Ab) (Cyanobacteria bacterium Yellowstone A-Prime).